We begin with the raw amino-acid sequence, 406 residues long: Probable 26S proteasome regulatory subunit 10B (406 aa).

191 to 198 (GPPGTGKT) provides a ligand contact to ATP.

Belongs to the AAA ATPase family.

It localises to the cytoplasm. The protein localises to the nucleus. In terms of biological role, the 26S proteasome is involved in the ATP-dependent degradation of ubiquitinated proteins. The regulatory (or ATPase) complex confers ATP dependency and substrate specificity to the 26S complex. This Caenorhabditis elegans protein is Probable 26S proteasome regulatory subunit 10B (rpt-4).